A 377-amino-acid chain; its full sequence is Adaptive-response sensory kinase SasA (377 aa).

The Histidine kinase domain occupies 154–373; the sequence is MLVHDLRSPL…SFHFTLPVYR (220 aa). Phosphohistidine; by autocatalysis is present on histidine 157.

In terms of assembly, homooligomerizes. Interacts with KaiC. Participates in the KaiABC clock complex, whose core is composed of a KaiC homohexamer, 6 KaiB and up to 6 KaiA dimers. SasA and KaiB(fs) compete to bind to KaiC.

The catalysed reaction is ATP + protein L-histidine = ADP + protein N-phospho-L-histidine.. Member of the two-component regulatory system SasA/RpaA involved in genome-wide circadian gene expression. One of several clock output pathways. Participates in the Kai clock protein complex, the main circadian regulator in cyanobacteria, via its interaction with KaiC. KaiC enhances the autophosphorylation activity of SasA, which then transfers its phosphate group to RpaA to activate it. In addition to its output function, recruits fold-shifted KaiB (KaiB(fs)) to KaiC to cooperatively form the KaiB(6):KaiC(6) complex (independent of SasA kinase activity). Required for robustness of the circadian rhythm of gene expression and is involved in clock output, also required for adaptation to light/dark cycles. This is Adaptive-response sensory kinase SasA from Synechococcus sp. (strain JA-3-3Ab) (Cyanobacteria bacterium Yellowstone A-Prime).